Consider the following 456-residue polypeptide: Equilibrative nucleoside transporter 2 (456 aa).

Residues 13–33 form a helical membrane-spanning segment; it reads LVGISFFILGLGTLLPWNFFI. Residues asparagine 48 and asparagine 57 are each glycosylated (N-linked (GlcNAc...) asparagine). Transmembrane regions (helical) follow at residues 70–90, 99–119, 124–144, 162–182, and 193–213; these read WVTL…SFLY, ILGS…LVKV, GPFF…SAVL, LFLS…LLSM, and LGYF…YLSL. Asparagine 225 carries N-linked (GlcNAc...) asparagine glycosylation. Serine 252 carries the phosphoserine modification. Transmembrane regions (helical) follow at residues 291–311, 324–344, 360–380, 386–406, and 432–452; these read WLTA…FPAI, WSQF…DWLG, LLPL…LCHV, LPIL…FAVS, and ALMT…SFLF.

It belongs to the SLC29A/ENT transporter (TC 2.A.57) family. Glycosylated. In terms of tissue distribution, highly expressed in skeletal muscle. Expressed in liver, lung, placenta, brain, heart, kidney and ovarian tissues. Expressed in testis at the blood-brain-barrier.

Its subcellular location is the apical cell membrane. The protein localises to the basolateral cell membrane. It catalyses the reaction inosine(in) = inosine(out). The catalysed reaction is adenosine(in) = adenosine(out). It carries out the reaction uridine(out) = uridine(in). The enzyme catalyses thymidine(in) = thymidine(out). It catalyses the reaction hypoxanthine(out) = hypoxanthine(in). The catalysed reaction is adenine(out) = adenine(in). It carries out the reaction cytidine(in) = cytidine(out). The enzyme catalyses thymine(out) = thymine(in). It catalyses the reaction uracil(in) = uracil(out). The catalysed reaction is guanine(out) = guanine(in). It carries out the reaction guanosine(in) = guanosine(out). Its function is as follows. Bidirectional uniporter involved in the facilitative transport of nucleosides and nucleobases, and contributes to maintaining their cellular homeostasis. Functions as a Na(+)-independent, passive transporter. Involved in the transport of nucleosides such as inosine, adenosine, uridine, thymidine, cytidine and guanosine. Also able to transport purine nucleobases (hypoxanthine, adenine, guanine) and pyrimidine nucleobases (thymine, uracil). Involved in nucleoside transport at basolateral membrane of kidney cells, allowing liver absorption of nucleoside metabolites. Mediates apical nucleoside uptake into Sertoli cells, thereby regulating the transport of nucleosides in testis across the blood-testis-barrier. Mediates both the influx and efflux of hypoxanthine in skeletal muscle microvascular endothelial cells to control the amount of intracellular hypoxanthine available for xanthine oxidase-mediated ROS production. Non functional nucleoside transporter protein for adenosine or thymidine transport. Does not express on cell membrane. The sequence is that of Equilibrative nucleoside transporter 2 from Homo sapiens (Human).